A 554-amino-acid polypeptide reads, in one-letter code: Putative acyl-coenzyme A synthetase (554 aa).

195–206 contributes to the AMP binding site; the sequence is LLYSSGTTGPPK.

This sequence belongs to the ATP-dependent AMP-binding enzyme family.

In Emericella nidulans (strain FGSC A4 / ATCC 38163 / CBS 112.46 / NRRL 194 / M139) (Aspergillus nidulans), this protein is Putative acyl-coenzyme A synthetase.